Consider the following 194-residue polypeptide: Imidazoleglycerol-phosphate dehydratase (194 aa).

It belongs to the imidazoleglycerol-phosphate dehydratase family.

Its subcellular location is the cytoplasm. It catalyses the reaction D-erythro-1-(imidazol-4-yl)glycerol 3-phosphate = 3-(imidazol-4-yl)-2-oxopropyl phosphate + H2O. Its pathway is amino-acid biosynthesis; L-histidine biosynthesis; L-histidine from 5-phospho-alpha-D-ribose 1-diphosphate: step 6/9. The polypeptide is Imidazoleglycerol-phosphate dehydratase (Thermus thermophilus (strain ATCC BAA-163 / DSM 7039 / HB27)).